We begin with the raw amino-acid sequence, 347 residues long: GTPase Obg (347 aa).

Positions 1 to 159 constitute an Obg domain; the sequence is MHFIDQAEIE…VRLRLELKLI (159 aa). One can recognise an OBG-type G domain in the interval 160-328; it reads AEVGIVGLPN…LLQRVWQCLG (169 aa). GTP is bound by residues 166–173, 191–195, 213–216, 280–283, and 309–311; these read GLPNAGKS, FTTLQ, DIPG, NKID, and SAI. The Mg(2+) site is built by S173 and T193.

It belongs to the TRAFAC class OBG-HflX-like GTPase superfamily. OBG GTPase family. Monomer. It depends on Mg(2+) as a cofactor.

It is found in the cytoplasm. An essential GTPase which binds GTP, GDP and possibly (p)ppGpp with moderate affinity, with high nucleotide exchange rates and a fairly low GTP hydrolysis rate. Plays a role in control of the cell cycle, stress response, ribosome biogenesis and in those bacteria that undergo differentiation, in morphogenesis control. The polypeptide is GTPase Obg (Synechococcus sp. (strain JA-2-3B'a(2-13)) (Cyanobacteria bacterium Yellowstone B-Prime)).